Consider the following 546-residue polypeptide: Glucose-6-phosphate isomerase (546 aa).

E356 (proton donor) is an active-site residue. Active-site residues include H387 and K507.

It belongs to the GPI family.

It localises to the cytoplasm. The enzyme catalyses alpha-D-glucose 6-phosphate = beta-D-fructose 6-phosphate. It functions in the pathway carbohydrate biosynthesis; gluconeogenesis. It participates in carbohydrate degradation; glycolysis; D-glyceraldehyde 3-phosphate and glycerone phosphate from D-glucose: step 2/4. In terms of biological role, catalyzes the reversible isomerization of glucose-6-phosphate to fructose-6-phosphate. The chain is Glucose-6-phosphate isomerase from Syntrophus aciditrophicus (strain SB).